The following is a 255-amino-acid chain: Indole-3-glycerol phosphate synthase (255 aa).

It belongs to the TrpC family.

It catalyses the reaction 1-(2-carboxyphenylamino)-1-deoxy-D-ribulose 5-phosphate + H(+) = (1S,2R)-1-C-(indol-3-yl)glycerol 3-phosphate + CO2 + H2O. It participates in amino-acid biosynthesis; L-tryptophan biosynthesis; L-tryptophan from chorismate: step 4/5. This chain is Indole-3-glycerol phosphate synthase, found in Streptococcus thermophilus (strain ATCC BAA-250 / LMG 18311).